We begin with the raw amino-acid sequence, 205 residues long: NADH-quinone oxidoreductase subunit J (205 aa).

Transmembrane regions (helical) follow at residues Met-1–Leu-21, Val-26–Leu-46, Leu-54–Leu-74, Leu-89–Leu-109, and Phe-142–Thr-162.

It belongs to the complex I subunit 6 family.

The protein resides in the cell membrane. The catalysed reaction is a quinone + NADH + 5 H(+)(in) = a quinol + NAD(+) + 4 H(+)(out). In terms of biological role, NDH-1 shuttles electrons from NADH, via FMN and iron-sulfur (Fe-S) centers, to quinones in the respiratory chain. Couples the redox reaction to proton translocation (for every two electrons transferred, four hydrogen ions are translocated across the cytoplasmic membrane), and thus conserves the redox energy in a proton gradient. This is NADH-quinone oxidoreductase subunit J (nuoJ) from Rickettsia prowazekii (strain Madrid E).